The following is a 305-amino-acid chain: uncharacterized protein (305 aa).

The interval 208–236 (SYAQSPAVKKKKWRHSGGKKNNPRENHID) is disordered. The span at 215–225 (VKKKKWRHSGG) shows a compositional bias: basic residues.

This is an uncharacterized protein from Bacillus subtilis (strain 168).